Here is a 362-residue protein sequence, read N- to C-terminus: UDP-N-acetylglucosamine--N-acetylmuramyl-(pentapeptide) pyrophosphoryl-undecaprenol N-acetylglucosamine transferase (362 aa).

UDP-N-acetyl-alpha-D-glucosamine is bound by residues 11–13 (TGG), N124, R163, S191, I246, and Q291.

It belongs to the glycosyltransferase 28 family. MurG subfamily.

The protein localises to the cell inner membrane. The enzyme catalyses di-trans,octa-cis-undecaprenyl diphospho-N-acetyl-alpha-D-muramoyl-L-alanyl-D-glutamyl-meso-2,6-diaminopimeloyl-D-alanyl-D-alanine + UDP-N-acetyl-alpha-D-glucosamine = di-trans,octa-cis-undecaprenyl diphospho-[N-acetyl-alpha-D-glucosaminyl-(1-&gt;4)]-N-acetyl-alpha-D-muramoyl-L-alanyl-D-glutamyl-meso-2,6-diaminopimeloyl-D-alanyl-D-alanine + UDP + H(+). It functions in the pathway cell wall biogenesis; peptidoglycan biosynthesis. Cell wall formation. Catalyzes the transfer of a GlcNAc subunit on undecaprenyl-pyrophosphoryl-MurNAc-pentapeptide (lipid intermediate I) to form undecaprenyl-pyrophosphoryl-MurNAc-(pentapeptide)GlcNAc (lipid intermediate II). The sequence is that of UDP-N-acetylglucosamine--N-acetylmuramyl-(pentapeptide) pyrophosphoryl-undecaprenol N-acetylglucosamine transferase from Idiomarina loihiensis (strain ATCC BAA-735 / DSM 15497 / L2-TR).